The chain runs to 203 residues: Cytochrome c oxidase assembly protein CtaG (203 aa).

At 1–19 (MDAGKAERRAGNGRRTDGR) the chain is on the cytoplasmic side. Residues 20 to 42 (RHLVVAAACAAFIAAMVGVTYAS) traverse the membrane as a helical; Signal-anchor for type II membrane protein segment. Over 43 to 203 (VPLYAMFCAL…AAARASGTGG (161 aa)) the chain is Periplasmic.

This sequence belongs to the COX11/CtaG family.

It localises to the cell inner membrane. In terms of biological role, exerts its effect at some terminal stage of cytochrome c oxidase synthesis, probably by being involved in the insertion of the copper B into subunit I. In Xanthobacter autotrophicus (strain ATCC BAA-1158 / Py2), this protein is Cytochrome c oxidase assembly protein CtaG.